A 522-amino-acid polypeptide reads, in one-letter code: 2-isopropylmalate synthase (522 aa).

In terms of domain architecture, Pyruvate carboxyltransferase spans 5-267; sequence VIIFDTTLRD…ETGINAKEIH (263 aa). Positions 14, 202, 204, and 238 each coordinate Mn(2+). Residues 392 to 522 are regulatory domain; it reads QLQQLVVQSD…MHKNRELGGV (131 aa).

This sequence belongs to the alpha-IPM synthase/homocitrate synthase family. LeuA type 1 subfamily. As to quaternary structure, homodimer. Mn(2+) is required as a cofactor.

The protein resides in the cytoplasm. It carries out the reaction 3-methyl-2-oxobutanoate + acetyl-CoA + H2O = (2S)-2-isopropylmalate + CoA + H(+). It functions in the pathway amino-acid biosynthesis; L-leucine biosynthesis; L-leucine from 3-methyl-2-oxobutanoate: step 1/4. Functionally, catalyzes the condensation of the acetyl group of acetyl-CoA with 3-methyl-2-oxobutanoate (2-ketoisovalerate) to form 3-carboxy-3-hydroxy-4-methylpentanoate (2-isopropylmalate). In Shewanella sp. (strain MR-7), this protein is 2-isopropylmalate synthase.